The following is a 173-amino-acid chain: Crossover junction endodeoxyribonuclease RuvC (173 aa).

Active-site residues include Asp-8, Glu-67, and Asp-139. 3 residues coordinate Mg(2+): Asp-8, Glu-67, and Asp-139.

It belongs to the RuvC family. Homodimer which binds Holliday junction (HJ) DNA. The HJ becomes 2-fold symmetrical on binding to RuvC with unstacked arms; it has a different conformation from HJ DNA in complex with RuvA. In the full resolvosome a probable DNA-RuvA(4)-RuvB(12)-RuvC(2) complex forms which resolves the HJ. The cofactor is Mg(2+).

It is found in the cytoplasm. The enzyme catalyses Endonucleolytic cleavage at a junction such as a reciprocal single-stranded crossover between two homologous DNA duplexes (Holliday junction).. Its function is as follows. The RuvA-RuvB-RuvC complex processes Holliday junction (HJ) DNA during genetic recombination and DNA repair. Endonuclease that resolves HJ intermediates. Cleaves cruciform DNA by making single-stranded nicks across the HJ at symmetrical positions within the homologous arms, yielding a 5'-phosphate and a 3'-hydroxyl group; requires a central core of homology in the junction. The consensus cleavage sequence is 5'-(A/T)TT(C/G)-3'. Cleavage occurs on the 3'-side of the TT dinucleotide at the point of strand exchange. HJ branch migration catalyzed by RuvA-RuvB allows RuvC to scan DNA until it finds its consensus sequence, where it cleaves and resolves the cruciform DNA. This is Crossover junction endodeoxyribonuclease RuvC from Vibrio vulnificus (strain YJ016).